Reading from the N-terminus, the 385-residue chain is Methionine aminopeptidase 1 (385 aa).

The C6H2-type zinc-finger motif lies at 6 to 59; it reads TRVCETAGCSSEAKLQCPTCLKLGIQGSYFCSQECFKGSWATHKLLHKKAKDEK. Zn(2+) contacts are provided by C9, C14, C22, C25, C36, C40, H48, and H52. H203 contacts a protein. D220, D231, and H294 together coordinate Zn(2+). H301 provides a ligand contact to a protein. Zn(2+) is bound by residues E327 and E358.

The protein belongs to the peptidase M24A family. Methionine aminopeptidase type 1 subfamily. In terms of assembly, associates with the 60S ribosomal subunit of the 80S translational complex. Requires Zn(2+) as cofactor. Co(2+) is required as a cofactor. It depends on Mn(2+) as a cofactor. Fe(2+) serves as cofactor.

It localises to the cytoplasm. The enzyme catalyses Release of N-terminal amino acids, preferentially methionine, from peptides and arylamides.. In terms of biological role, cotranslationally removes the N-terminal methionine from nascent proteins. The N-terminal methionine is often cleaved when the second residue in the primary sequence is small and uncharged (Met-Ala-, Cys, Gly, Pro, Ser, Thr, or Val). The polypeptide is Methionine aminopeptidase 1 (METAP1) (Gallus gallus (Chicken)).